The primary structure comprises 188 residues: dCTP deaminase, dUMP-forming (188 aa).

Residues 101 to 106, Asp-119, 127 to 129, Gln-148, Tyr-162, and Gln-174 each bind dCTP; these read KSSLGR and TLE. The Proton donor/acceptor role is filled by Glu-129.

Belongs to the dCTP deaminase family. As to quaternary structure, homotrimer.

It catalyses the reaction dCTP + 2 H2O = dUMP + NH4(+) + diphosphate. Its pathway is pyrimidine metabolism; dUMP biosynthesis; dUMP from dCTP: step 1/1. Functionally, bifunctional enzyme that catalyzes both the deamination of dCTP to dUTP and the hydrolysis of dUTP to dUMP without releasing the toxic dUTP intermediate. In Corynebacterium jeikeium (strain K411), this protein is dCTP deaminase, dUMP-forming.